Consider the following 28-residue polypeptide: Unknown protein from spot 154 of 2D-PAGE of etiolated coleoptile (28 aa).

The protein is Unknown protein from spot 154 of 2D-PAGE of etiolated coleoptile of Zea mays (Maize).